The following is a 245-amino-acid chain: Carboxy-S-adenosyl-L-methionine synthase (245 aa).

S-adenosyl-L-methionine is bound by residues tyrosine 42, 67–69 (GCS), 92–93 (DN), 120–121 (DI), asparagine 135, and arginine 202.

Belongs to the class I-like SAM-binding methyltransferase superfamily. Cx-SAM synthase family. In terms of assembly, homodimer.

It catalyses the reaction prephenate + S-adenosyl-L-methionine = carboxy-S-adenosyl-L-methionine + 3-phenylpyruvate + H2O. Its function is as follows. Catalyzes the conversion of S-adenosyl-L-methionine (SAM) to carboxy-S-adenosyl-L-methionine (Cx-SAM). This is Carboxy-S-adenosyl-L-methionine synthase from Vibrio campbellii (strain ATCC BAA-1116).